The primary structure comprises 366 residues: Beta sliding clamp (366 aa).

It belongs to the beta sliding clamp family. As to quaternary structure, forms a ring-shaped head-to-tail homodimer around DNA which binds and tethers DNA polymerases and other proteins to the DNA. The DNA replisome complex has a single clamp-loading complex (3 tau and 1 each of delta, delta', psi and chi subunits) which binds 3 Pol III cores (1 core on the leading strand and 2 on the lagging strand) each with a beta sliding clamp dimer. Additional proteins in the replisome are other copies of gamma, psi and chi, Ssb, DNA helicase and RNA primase.

Its subcellular location is the cytoplasm. Confers DNA tethering and processivity to DNA polymerases and other proteins. Acts as a clamp, forming a ring around DNA (a reaction catalyzed by the clamp-loading complex) which diffuses in an ATP-independent manner freely and bidirectionally along dsDNA. Initially characterized for its ability to contact the catalytic subunit of DNA polymerase III (Pol III), a complex, multichain enzyme responsible for most of the replicative synthesis in bacteria; Pol III exhibits 3'-5' exonuclease proofreading activity. The beta chain is required for initiation of replication as well as for processivity of DNA replication. In Buchnera aphidicola subsp. Rhopalosiphum padi, this protein is Beta sliding clamp (dnaN).